The following is a 440-amino-acid chain: D-serine dehydratase (440 aa).

An N6-(pyridoxal phosphate)lysine modification is found at Lys116.

This sequence belongs to the serine/threonine dehydratase family. DsdA subfamily. In terms of assembly, monomer. Pyridoxal 5'-phosphate serves as cofactor.

It carries out the reaction D-serine = pyruvate + NH4(+). The chain is D-serine dehydratase from Salmonella dublin (strain CT_02021853).